The primary structure comprises 240 residues: 2,3,4,5-tetrahydropyridine-2,6-dicarboxylate N-acetyltransferase (240 aa).

Belongs to the transferase hexapeptide repeat family. DapH subfamily.

The enzyme catalyses (S)-2,3,4,5-tetrahydrodipicolinate + acetyl-CoA + H2O = L-2-acetamido-6-oxoheptanedioate + CoA. It participates in amino-acid biosynthesis; L-lysine biosynthesis via DAP pathway; LL-2,6-diaminopimelate from (S)-tetrahydrodipicolinate (acetylase route): step 1/3. In terms of biological role, catalyzes the transfer of an acetyl group from acetyl-CoA to tetrahydrodipicolinate. The chain is 2,3,4,5-tetrahydropyridine-2,6-dicarboxylate N-acetyltransferase from Bacillus cereus (strain G9842).